Consider the following 151-residue polypeptide: Small heat shock protein HspD (151 aa).

The region spanning 28-138 is the sHSP domain; sequence RATEDNYPPY…KPRRIAINGA (111 aa).

Belongs to the small heat shock protein (HSP20) family.

In Bradyrhizobium diazoefficiens (strain JCM 10833 / BCRC 13528 / IAM 13628 / NBRC 14792 / USDA 110), this protein is Small heat shock protein HspD (hspD).